The sequence spans 378 residues: Dual-specificity RNA methyltransferase RlmN (378 aa).

Glutamate 97 acts as the Proton acceptor in catalysis. The region spanning 103–341 is the Radical SAM core domain; it reads EGDRATLCVS…VMVRKTRGDD (239 aa). Cysteine 110 and cysteine 346 are oxidised to a cystine. [4Fe-4S] cluster contacts are provided by cysteine 117, cysteine 121, and cysteine 124. Residues 171-172, serine 203, 225-227, and asparagine 303 each bind S-adenosyl-L-methionine; these read GE and SLH. Cysteine 346 serves as the catalytic S-methylcysteine intermediate.

Belongs to the radical SAM superfamily. RlmN family. It depends on [4Fe-4S] cluster as a cofactor.

The protein resides in the cytoplasm. The catalysed reaction is adenosine(2503) in 23S rRNA + 2 reduced [2Fe-2S]-[ferredoxin] + 2 S-adenosyl-L-methionine = 2-methyladenosine(2503) in 23S rRNA + 5'-deoxyadenosine + L-methionine + 2 oxidized [2Fe-2S]-[ferredoxin] + S-adenosyl-L-homocysteine. It carries out the reaction adenosine(37) in tRNA + 2 reduced [2Fe-2S]-[ferredoxin] + 2 S-adenosyl-L-methionine = 2-methyladenosine(37) in tRNA + 5'-deoxyadenosine + L-methionine + 2 oxidized [2Fe-2S]-[ferredoxin] + S-adenosyl-L-homocysteine. In terms of biological role, specifically methylates position 2 of adenine 2503 in 23S rRNA and position 2 of adenine 37 in tRNAs. m2A2503 modification seems to play a crucial role in the proofreading step occurring at the peptidyl transferase center and thus would serve to optimize ribosomal fidelity. The polypeptide is Dual-specificity RNA methyltransferase RlmN (Idiomarina loihiensis (strain ATCC BAA-735 / DSM 15497 / L2-TR)).